We begin with the raw amino-acid sequence, 956 residues long: MSMTASSSTPRPTPKYDDALILNLSSAAKIERIVDKVKSLSRERFAPEDFSFQWFRSISRVERTTDNNPSAATTAAATTTVHSSASSSAAAAASSEAGGTRVPCVDRWPFFPFRALLVTGTAGAGKTSSIQVLAANLDCVITGTTVIAAQNLSAILNRTRSAQVKTIYRVFGFVSKHVPLADSAVSHETLERYRVCEPHEETTIQRLQINDLLAYWPVIADIVDKCLNMWERKAASASAAAAAAACEDLSELCESNIIVIDECGLMLRYMLQVVVFFYYFYNALGDTRLYRERRVPCIICVGSPTQTEALESRYDHYTQNKSVRKGVDVLSALIQNEVLINYCDIADNWVMFIHNKRCTDLDFGDLLKYMEFGIPLKEEHVAYVDRFVRPPSSIRNPSYAAEMTRLFLSHVEVQAYFKRLHEQIRLSERHRLFDLPVYCVVNNRAYQELCELADPLGDSPQPVELWFRQNLARIINYSQFVDHNLSSEITKEALRPAADVVATNNSSVQAHGGGGSVIGSTGGNDETAFFQDDDTTTAPDSRETLLTLRITYIKGSSVGVNSKVRACVIGYQGTVERFVDILQKDTFIERTPCEQAAYAYSLVSGLLFSAMYYFYVSPYTTEEMLRELARVELPDVSSLCAAAAATAAAPAWSGGENPINNHVDADSSQGGQSVPVSQRMEHGQEETHDIPCLSNHHDDSDAITDAELMDHTSLYADPFFLKYVKPPSLALLSFEETVHMYTTFRDIFLKRYQLMQRLTGGRFATLPLVTYNRRNVVFKANCQISSQTGSFVGMLSHVSPAQTYTLEGYTSDNVLSLPSDRHRIHPEVVQRGLSRLVLRDALGFLFVLDVNVSRFVESAQGKSLHVCTTVDYGLTSRTAMTIAKSQGLSLEKVAVDFGDHPKNLKMSHIYVAMSRVTDPEHLMMNVNPLRLPYEKNTAITPYICRALKDKRTTLIF.

120-127 is an ATP binding site; the sequence is GTAGAGKT. The tract at residues 658–694 is disordered; it reads PINNHVDADSSQGGQSVPVSQRMEHGQEETHDIPCLS. Residues 667-678 show a composition bias toward low complexity; it reads SSQGGQSVPVSQ. Basic and acidic residues predominate over residues 679–694; that stretch reads RMEHGQEETHDIPCLS.

This sequence belongs to the herpesviridae helicase family. In terms of assembly, associates with the primase and the primase-associated factor to form the helicase-primase complex.

The protein resides in the host nucleus. Functionally, component of the helicase/primase complex. Unwinds the DNA at the replication forks and generates single-stranded DNA for both leading and lagging strand synthesis. The primase synthesizes short RNA primers on the lagging strand that the polymerase elongates using dNTPs. Possesses helicase-like motifs and therefore may act as the helicase subunit of the complex. This Human cytomegalovirus (strain AD169) (HHV-5) protein is DNA replication helicase.